The sequence spans 494 residues: Integrin beta-like protein 1 (494 aa).

Residues 1–23 (MHPPGFKNFLLLVSSLFFIGLSA) form the signal peptide. 40 disulfides stabilise this stretch: cysteine 40-cysteine 71, cysteine 51-cysteine 69, cysteine 63-cysteine 74, cysteine 76-cysteine 89, cysteine 91-cysteine 112, cysteine 96-cysteine 110, cysteine 104-cysteine 115, cysteine 117-cysteine 126, cysteine 132-cysteine 159, cysteine 143-cysteine 157, cysteine 151-cysteine 162, cysteine 164-cysteine 178, cysteine 180-cysteine 202, cysteine 185-cysteine 200, cysteine 194-cysteine 205, cysteine 207-cysteine 216, cysteine 220-cysteine 247, cysteine 231-cysteine 245, cysteine 239-cysteine 250, cysteine 252-cysteine 269, cysteine 271-cysteine 296, cysteine 276-cysteine 294, cysteine 288-cysteine 299, cysteine 301-cysteine 310, cysteine 316-cysteine 343, cysteine 327-cysteine 341, cysteine 335-cysteine 346, cysteine 348-cysteine 361, cysteine 363-cysteine 384, cysteine 368-cysteine 382, cysteine 376-cysteine 387, cysteine 389-cysteine 398, cysteine 404-cysteine 431, cysteine 415-cysteine 429, cysteine 423-cysteine 434, cysteine 436-cysteine 448, cysteine 450-cysteine 471, cysteine 455-cysteine 469, cysteine 463-cysteine 474, and cysteine 476-cysteine 485. I-EGF domains lie at 40 to 90 (CRLS…PLCE), 91 to 127 (CHDWVCETYDGKTCAGHGTCDCGKCKCDVGWSGEACQ), 132 to 179 (CDLT…KFCE), 180 to 217 (CDDRECIDDETEEICGGHGKCYCGNCYCEAGWHGDKCE), 220 to 270 (CDIT…DTCE), 271 to 311 (CDER…KKCE), 316 to 362 (CPLS…KTCE), 363 to 399 (CDDRRCEDLDGVVCGGRGTCSCGRCVCEKGWFGKLCQ), 404 to 449 (CNMT…EFCD), and 450 to 486 (CDDRDCDKHDGLICTGNGICSCGNCECWDGWNGNACE). Residues 51–95 (CRAPGQPPGSALCHDRGRCECGVCICHVTEPGTYFGPLCECHDWV) form an I repeat. Residues 51–494 (CRAPGQPPGS…CEIWLGTEYP (444 aa)) form a cysteine-rich tandem repeats region. The stretch at 96–142 (CETYDGKTCAGHGTCDCGKCKCDVGWSGEACQYPTKCDLTKKISNQM) is one II repeat. The stretch at 143–184 (CKNSQDVICSNAGTCHCGRCKCDNSDGHGLIYGKFCECDDRE) is one III repeat. Residues 185-230 (CIDDETEEICGGHGKCYCGNCYCEAGWHGDKCEFQCDITPWESKRR) form an IV repeat. The V repeat unit spans residues 231–275 (CTSPDGKVCSNRGTCVCGECSCHDVDPTGDWGDIHGDTCECDERD). A VI repeat occupies 276–326 (CRAVYDRYSDDFCSGHGQCNCGRCDCRAGWYGKKCEHPKNCPLSAEESTRK). The VII repeat unit spans residues 327 to 367 (CQGSSDLPCSGRGRCECGRCTCYPPGDSRVYGKTCECDDRR). One copy of the VIII repeat lies at 368 to 414 (CEDLDGVVCGGRGTCSCGRCVCEKGWFGKLCQHPRKCNMTEEQSRSL). An N-linked (GlcNAc...) asparagine glycan is attached at asparagine 405. One copy of the IX repeat lies at 415 to 454 (CESADGTLCSGKGSCHCGKCICSGEEWYISGEFCDCDDRD). One copy of the X repeat lies at 455-494 (CDKHDGLICTGNGICSCGNCECWDGWNGNACEIWLGTEYP).

The protein resides in the secreted. The chain is Integrin beta-like protein 1 (Itgbl1) from Rattus norvegicus (Rat).